Reading from the N-terminus, the 579-residue chain is Kelch repeat and BTB domain-containing protein F47D12.7 (579 aa).

The BTB domain occupies 51–119; that stretch reads PTVTLVLRNN…PKAFEQGIKP (69 aa). Kelch repeat units lie at residues 266–316, 317–363, 369–415, 417–463, 465–511, and 513–559; these read AIVC…VVED, KLIV…RVND, LVFA…TIDN, IVAI…SIMN, VCMI…QMDT, and YVYV…TLSD.

The protein is Kelch repeat and BTB domain-containing protein F47D12.7 of Caenorhabditis elegans.